An 88-amino-acid chain; its full sequence is MVSNTKKLELIKSFGKNEKDSGSIEAQIAILTEDIESLKLHFEKNKKDLHSRRGFIAKINHRKKLLAYLRKNKFTSYASLIEKLNIRK.

The protein belongs to the universal ribosomal protein uS15 family. As to quaternary structure, part of the 30S ribosomal subunit. Forms a bridge to the 50S subunit in the 70S ribosome, contacting the 23S rRNA.

In terms of biological role, one of the primary rRNA binding proteins, it binds directly to 16S rRNA where it helps nucleate assembly of the platform of the 30S subunit by binding and bridging several RNA helices of the 16S rRNA. Forms an intersubunit bridge (bridge B4) with the 23S rRNA of the 50S subunit in the ribosome. The protein is Small ribosomal subunit protein uS15 of Mycoplasma mobile (strain ATCC 43663 / 163K / NCTC 11711) (Mesomycoplasma mobile).